A 424-amino-acid polypeptide reads, in one-letter code: Histidinol dehydrogenase (424 aa).

Residues tyrosine 124, glutamine 186, and asparagine 209 each coordinate NAD(+). The substrate site is built by serine 232, glutamine 254, and histidine 257. The Zn(2+) site is built by glutamine 254 and histidine 257. Residues glutamate 322 and histidine 323 each act as proton acceptor in the active site. Residues histidine 323, aspartate 356, glutamate 410, and histidine 415 each contribute to the substrate site. Zn(2+) is bound at residue aspartate 356. Histidine 415 provides a ligand contact to Zn(2+).

The protein belongs to the histidinol dehydrogenase family. Zn(2+) serves as cofactor.

It carries out the reaction L-histidinol + 2 NAD(+) + H2O = L-histidine + 2 NADH + 3 H(+). It participates in amino-acid biosynthesis; L-histidine biosynthesis; L-histidine from 5-phospho-alpha-D-ribose 1-diphosphate: step 9/9. Catalyzes the sequential NAD-dependent oxidations of L-histidinol to L-histidinaldehyde and then to L-histidine. In Moorella thermoacetica (strain ATCC 39073 / JCM 9320), this protein is Histidinol dehydrogenase.